A 231-amino-acid polypeptide reads, in one-letter code: Orotidine 5'-phosphate decarboxylase (231 aa).

Substrate is bound by residues D11, K33, 60-69, T117, R178, Q187, G207, and R208; that span reads DLKFHDIPNT. K62 serves as the catalytic Proton donor.

This sequence belongs to the OMP decarboxylase family. Type 1 subfamily. In terms of assembly, homodimer.

It carries out the reaction orotidine 5'-phosphate + H(+) = UMP + CO2. It participates in pyrimidine metabolism; UMP biosynthesis via de novo pathway; UMP from orotate: step 2/2. Its function is as follows. Catalyzes the decarboxylation of orotidine 5'-monophosphate (OMP) to uridine 5'-monophosphate (UMP). The protein is Orotidine 5'-phosphate decarboxylase of Nitrosomonas europaea (strain ATCC 19718 / CIP 103999 / KCTC 2705 / NBRC 14298).